The primary structure comprises 95 residues: MASETVANHQEKALALLQADAEKILRLIKVQMDHLTMPQCPLYEEVLDTQMFGLSREVDFAVRLGLIAEEQGKAMLGELERELSALHEAFTNKQQ.

This sequence belongs to the UPF0358 family.

This Bacillus cereus (strain G9842) protein is UPF0358 protein BCG9842_B1188.